A 213-amino-acid chain; its full sequence is 3-isopropylmalate dehydratase small subunit (213 aa).

The protein belongs to the LeuD family. LeuD type 1 subfamily. Heterodimer of LeuC and LeuD.

The catalysed reaction is (2R,3S)-3-isopropylmalate = (2S)-2-isopropylmalate. The protein operates within amino-acid biosynthesis; L-leucine biosynthesis; L-leucine from 3-methyl-2-oxobutanoate: step 2/4. Catalyzes the isomerization between 2-isopropylmalate and 3-isopropylmalate, via the formation of 2-isopropylmaleate. The chain is 3-isopropylmalate dehydratase small subunit from Neisseria meningitidis serogroup C (strain 053442).